The chain runs to 736 residues: MASEGMILTNHDHQIRVGVLTVSDSCFRNLAEDRSGINLKDLVQDPSLLGGTISAYKIVPDEIEEIKETLIDWCDEKELNLILTTGGTGFAPRDVTPEATKEVIEREAPGMALAMLMGSLNVTPLGMLSRPVCGIRGKTLIINLPGSKKGSQECFQFILPALPHAIDLLRDAIVKVKEVHDELEDLPSPPPPLSPPPTTSPHKQTEDKGVQCEEEEEEKKDSGVASTEDSSSSHITAAAIAAKIPDSIISRGVQVLPRDTASLSTTPSESPRAQATSRLSTASCPTPKVQSRCSSKENILRASHSAVDITKVARRHRMSPFPLTSMDKAFITVLEMTPVLGTEIINYRDGMGRVLAQDVYAKDNLPPFPASVKDGYAVRAADGPGDRFIIGESQAGEQPTQTVMPGQVMRVTTGAPIPCGADAVVQVEDTELIRESDDGTEELEVRILVQARPGQDIRPIGHDIKRGECVLAKGTHTGPSEVGLLATVGVTEVEVNKFPVVAVMSTGNELLNPEDDVLPGKIRDSNRSTLLATIQAHGYPTINLGIVGDNPDDLLNALNERISRADVIITSGGVSMGGKYYLKQVLDIDLHAQIHFGRVFMKPGLPTTFATLDIDGVRKIIFALPGQSVSAVVTCNLFVVPALRKMQGILDPRPTIIKARLSCDVKLDPRPEYHRCILTWHHQEPHPWAQSTGNQMSSRLMSMRSANGLLMLPPKTEQYVELHKGEVVDVMVIGRL.

Residues 14–153 are MPT Mo-transferase; that stretch reads QIRVGVLTVS…LPGSKKGSQE (140 aa). 2 disordered regions span residues 181–232 and 260–290; these read DELE…DSSS and TASL…PKVQ. A compositionally biased stretch (pro residues) spans 187–199; that stretch reads PSPPPPLSPPPTT. Residues 261 to 290 are compositionally biased toward polar residues; the sequence is ASLSTTPSESPRAQATSRLSTASCPTPKVQ. The MPT adenylyltransferase stretch occupies residues 294 to 736; that stretch reads SSKENILRAS…VVDVMVIGRL (443 aa).

It in the N-terminal section; belongs to the MoaB/Mog family. In the C-terminal section; belongs to the MoeA family. In terms of assembly, homotrimer, homodimer and homooligomer. Interacts with glycine receptors. The cofactor is Mg(2+).

It localises to the postsynaptic cell membrane. Its subcellular location is the cell membrane. The protein resides in the cytoplasm. The protein localises to the cytosol. It is found in the cytoskeleton. It localises to the cell projection. Its subcellular location is the dendrite. The protein resides in the postsynaptic density. The enzyme catalyses molybdopterin + ATP + H(+) = adenylyl-molybdopterin + diphosphate. It catalyses the reaction adenylyl-molybdopterin + molybdate = Mo-molybdopterin + AMP + H(+). The protein operates within cofactor biosynthesis; molybdopterin biosynthesis. Its function is as follows. Microtubule-associated protein involved in membrane protein-cytoskeleton interactions. It is thought to anchor the inhibitory glycine receptor (GLYR) to subsynaptic microtubules. Acts as a major instructive molecule at inhibitory synapses, where it also clusters GABA type A receptors. Functionally, also has a catalytic activity and catalyzes two steps in the biosynthesis of the molybdenum cofactor. In the first step, molybdopterin is adenylated. Subsequently, molybdate is inserted into adenylated molybdopterin and AMP is released. This is Gephyrin (GPHN) from Gallus gallus (Chicken).